The sequence spans 402 residues: tRNA pseudouridine synthase Pus10 (402 aa).

The THUMP domain maps to 37 to 159 (RLRGERLVEK…QIRVHVQINP (123 aa)). Residue aspartate 228 is the Nucleophile of the active site. Substrate is bound by residues tyrosine 296 and tyrosine 364.

Belongs to the pseudouridine synthase Pus10 family.

It catalyses the reaction uridine(54) in tRNA = pseudouridine(54) in tRNA. The catalysed reaction is uridine(55) in tRNA = pseudouridine(55) in tRNA. Functionally, responsible for synthesis of pseudouridine from uracil-54 and uracil-55 in the psi GC loop of transfer RNAs. This Methanothermobacter marburgensis (strain ATCC BAA-927 / DSM 2133 / JCM 14651 / NBRC 100331 / OCM 82 / Marburg) (Methanobacterium thermoautotrophicum) protein is tRNA pseudouridine synthase Pus10.